We begin with the raw amino-acid sequence, 467 residues long: Pachytene checkpoint protein 2 homolog (467 aa).

Residue 209–216 (GPPGTGKT) coordinates ATP.

Belongs to the AAA ATPase family. PCH2 subfamily.

It localises to the chromosome. In terms of biological role, plays a key role in chromosome recombination during meiosis. Mediates meiotic chromosome remodeling and crossover maturation. The protein is Pachytene checkpoint protein 2 homolog of Arabidopsis thaliana (Mouse-ear cress).